Reading from the N-terminus, the 510-residue chain is NAD(P)H-quinone oxidoreductase subunit 2 A, chloroplastic (510 aa).

13 helical membrane-spanning segments follow: residues 24–44 (LLLFDGSLIFPECILIFGLIL), 57–77 (IPWLYFISSTSLVMSITALLF), 99–119 (IFQFLILLCSTLCIPLSVEYI), 124–144 (MAITEFLLFVLTATLGGMFLC), 149–169 (LITIFVAPECFSLCSYLLSGY), 183–203 (YLLMGGASSSILVHGFSWLYG), 227–247 (PGISIALIFITVGIGFKLSPA), 295–315 (WHLLLEILAILSMILGNLIAI), 323–343 (MLAYSSIGQIGYVIIGIIVGD), 354–374 (YMLFYISMNLGTFACIVLFGL), 395–415 (ALSLALCLLSLGGLPPLAGFF), 418–438 (LYLFWCGWQAGLYFLVLIGLL), and 484–504 (MIVCVIASTIPGISMNPIIAI).

It belongs to the complex I subunit 2 family. As to quaternary structure, NDH is composed of at least 16 different subunits, 5 of which are encoded in the nucleus.

It localises to the plastid. The protein localises to the chloroplast thylakoid membrane. It carries out the reaction a plastoquinone + NADH + (n+1) H(+)(in) = a plastoquinol + NAD(+) + n H(+)(out). It catalyses the reaction a plastoquinone + NADPH + (n+1) H(+)(in) = a plastoquinol + NADP(+) + n H(+)(out). Functionally, NDH shuttles electrons from NAD(P)H:plastoquinone, via FMN and iron-sulfur (Fe-S) centers, to quinones in the photosynthetic chain and possibly in a chloroplast respiratory chain. The immediate electron acceptor for the enzyme in this species is believed to be plastoquinone. Couples the redox reaction to proton translocation, and thus conserves the redox energy in a proton gradient. This Solanum bulbocastanum (Wild potato) protein is NAD(P)H-quinone oxidoreductase subunit 2 A, chloroplastic.